The following is a 259-amino-acid chain: DNA utilization protein HofM (259 aa).

In terms of biological role, required for the use of extracellular DNA as a nutrient. The polypeptide is DNA utilization protein HofM (hofM) (Escherichia coli (strain K12)).